We begin with the raw amino-acid sequence, 943 residues long: Lactoferrin-binding protein A (943 aa).

The signal sequence occupies residues 1–27 (MNKKHGFPLTLTALAIATAFPAYAAQA). The 127-residue stretch at 52 to 178 (RRSKEATGLG…LGGAVAFRTK (127 aa)) folds into the TBDR plug domain. The region spanning 189-943 (SWGIQAKTAY…NFSLALEMKF (755 aa)) is the TBDR beta-barrel domain. A TonB C-terminal box motif is present at residues 926 to 943 (GRYAAPGRNFSLALEMKF).

This sequence belongs to the TonB-dependent receptor family.

It is found in the cell outer membrane. Unknown. May be an iron-siderophore receptor. The sequence is that of Lactoferrin-binding protein A (lbpA) from Neisseria meningitidis serogroup B (strain ATCC BAA-335 / MC58).